The sequence spans 422 residues: Protein IQ-DOMAIN 5 (422 aa).

A Nuclear localization signal motif is present at residues 23–30 (SKKDENVK). 3 consecutive IQ domains span residues 87 to 115 (ENRAATRIQTAYRGFLARRALRALKGLVR), 116 to 138 (LQALVRGHAVRKQAAVTLRCMQA), and 139 to 164 (LVRVQARVRARRVRLALELESETSQQ). Residues 137–151 (QALVRVQARVRARRV) form a calmodulin-binding region. The segment at 269–422 (GENGMEQSEN…NSDPIKQRLA (154 aa)) is disordered. The span at 273-308 (MEQSENVPKTQIKSVSKMPNTSNLVSGVSSQMTGPC) shows a compositional bias: polar residues. A compositionally biased stretch (low complexity) spans 310-327 (SDGDSSSPGISSSIPVVS). Residues 355 to 371 (NPKERSREPNRSSKERL) show a composition bias toward basic and acidic residues. The segment covering 373 to 387 (LPNSGKSLGSQSTKA) has biased composition (polar residues). The span at 412–422 (RNSDPIKQRLA) shows a compositional bias: basic and acidic residues.

Belongs to the IQD family. As to quaternary structure, binds to multiple calmodulin (CaM) in the presence of Ca(2+) and CaM-like proteins. As to expression, expressed mostly in vegetative tissues including older parts of the root, cotyledons, leaves and shoot apical meristems (SAM). Present at low levels in pollen, siliques and seeds.

The protein localises to the nucleus. It localises to the cytoplasm. The protein resides in the cytoskeleton. It is found in the spindle. Its subcellular location is the phragmoplast. In terms of biological role, may be involved in cooperative interactions with calmodulins or calmodulin-like proteins. Recruits calmodulin (CaM) calcium sensor proteins to cortical microtubule arrays, thus being a potential scaffold in cellular signaling and trafficking. Binds to microtubules (MTs) and promotes MT assembly and dynamics to modulate pavement cell (PC) morphogenesis via cellulose deposition-dependent anisotropic cell expansion triggered by cellulose synthase complexes (CSCs). May associate with nucleic acids and regulate gene expression at the transcriptional or post-transcriptional level. The protein is Protein IQ-DOMAIN 5 of Arabidopsis thaliana (Mouse-ear cress).